We begin with the raw amino-acid sequence, 423 residues long: Glucose-1-phosphate adenylyltransferase (423 aa).

Alpha-D-glucose 1-phosphate-binding positions include Tyr-107, Gly-172, 187 to 188 (EK), and Ser-205.

It belongs to the bacterial/plant glucose-1-phosphate adenylyltransferase family. As to quaternary structure, homotetramer.

The enzyme catalyses alpha-D-glucose 1-phosphate + ATP + H(+) = ADP-alpha-D-glucose + diphosphate. Its pathway is glycan biosynthesis; glycogen biosynthesis. Its function is as follows. Involved in the biosynthesis of ADP-glucose, a building block required for the elongation reactions to produce glycogen. Catalyzes the reaction between ATP and alpha-D-glucose 1-phosphate (G1P) to produce pyrophosphate and ADP-Glc. This is Glucose-1-phosphate adenylyltransferase from Cereibacter sphaeroides (strain ATCC 17025 / ATH 2.4.3) (Rhodobacter sphaeroides).